The chain runs to 199 residues: NADH-quinone oxidoreductase subunit C (199 aa).

The protein belongs to the complex I 30 kDa subunit family. In terms of assembly, NDH-1 is composed of 14 different subunits. Subunits NuoB, C, D, E, F, and G constitute the peripheral sector of the complex.

It localises to the cell inner membrane. The enzyme catalyses a quinone + NADH + 5 H(+)(in) = a quinol + NAD(+) + 4 H(+)(out). In terms of biological role, NDH-1 shuttles electrons from NADH, via FMN and iron-sulfur (Fe-S) centers, to quinones in the respiratory chain. The immediate electron acceptor for the enzyme in this species is believed to be ubiquinone. Couples the redox reaction to proton translocation (for every two electrons transferred, four hydrogen ions are translocated across the cytoplasmic membrane), and thus conserves the redox energy in a proton gradient. This chain is NADH-quinone oxidoreductase subunit C, found in Cupriavidus metallidurans (strain ATCC 43123 / DSM 2839 / NBRC 102507 / CH34) (Ralstonia metallidurans).